The primary structure comprises 245 residues: MIIPALDLIDGTVVRLHQGDYGKQRDYGNDPLPRLQDYAAQGAEVLHLVDLTGAKDPAKRQIPLIKTLVAGVNVPVQVGGGVRSEEDVATLLEAGVARVVVGSTAVKSPEMVKGWFERFGADALVLALDVRIDEQGNKQVAVSGWQENSGVSLEQLVETYLPVGLKHVLCTDISRDGTLAGSNVSLYEEVCARYPQVAFQSSGGIGDINDVAALRGTGVRGVIVGRALLEGKFTVKEAIACWQNA.

Asp-7 functions as the Proton acceptor in the catalytic mechanism. Asp-129 serves as the catalytic Proton donor.

Belongs to the HisA/HisF family.

Its subcellular location is the cytoplasm. The catalysed reaction is 1-(5-phospho-beta-D-ribosyl)-5-[(5-phospho-beta-D-ribosylamino)methylideneamino]imidazole-4-carboxamide = 5-[(5-phospho-1-deoxy-D-ribulos-1-ylimino)methylamino]-1-(5-phospho-beta-D-ribosyl)imidazole-4-carboxamide. It participates in amino-acid biosynthesis; L-histidine biosynthesis; L-histidine from 5-phospho-alpha-D-ribose 1-diphosphate: step 4/9. The polypeptide is 1-(5-phosphoribosyl)-5-[(5-phosphoribosylamino)methylideneamino] imidazole-4-carboxamide isomerase (Escherichia coli O127:H6 (strain E2348/69 / EPEC)).